Consider the following 387-residue polypeptide: GTPase Obg (387 aa).

Residues 1 to 159 form the Obg domain; the sequence is MKFVDEAVIR…RSLRLELMLL (159 aa). In terms of domain architecture, OBG-type G spans 160-333; the sequence is ADVGLLGMPN…LALKLMDFID (174 aa). Residues 166–173, 191–195, 213–216, 283–286, and 314–316 each bind GTP; these read GMPNAGKS, FTTLV, DIPG, NKTD, and SAY. Mg(2+) contacts are provided by serine 173 and threonine 193.

Belongs to the TRAFAC class OBG-HflX-like GTPase superfamily. OBG GTPase family. As to quaternary structure, monomer. Mg(2+) serves as cofactor.

It localises to the cytoplasm. An essential GTPase which binds GTP, GDP and possibly (p)ppGpp with moderate affinity, with high nucleotide exchange rates and a fairly low GTP hydrolysis rate. Plays a role in control of the cell cycle, stress response, ribosome biogenesis and in those bacteria that undergo differentiation, in morphogenesis control. This is GTPase Obg from Shewanella loihica (strain ATCC BAA-1088 / PV-4).